A 245-amino-acid polypeptide reads, in one-letter code: Uridylate kinase (245 aa).

Residue 18–21 (KLSG) participates in ATP binding. Gly-60 serves as a coordination point for UMP. Gly-61 and Arg-65 together coordinate ATP. Residues Asp-80 and 141 to 148 (TGNPFFTT) each bind UMP. Positions 168, 174, and 177 each coordinate ATP.

Belongs to the UMP kinase family. Homohexamer.

Its subcellular location is the cytoplasm. The catalysed reaction is UMP + ATP = UDP + ADP. It functions in the pathway pyrimidine metabolism; CTP biosynthesis via de novo pathway; UDP from UMP (UMPK route): step 1/1. With respect to regulation, inhibited by UTP. Catalyzes the reversible phosphorylation of UMP to UDP. The chain is Uridylate kinase from Pseudomonas aeruginosa (strain UCBPP-PA14).